Consider the following 112-residue polypeptide: Small ribosomal subunit protein uS17 (112 aa).

It belongs to the universal ribosomal protein uS17 family. Part of the 30S ribosomal subunit.

In terms of biological role, one of the primary rRNA binding proteins, it binds specifically to the 5'-end of 16S ribosomal RNA. This is Small ribosomal subunit protein uS17 from Thermotoga neapolitana (strain ATCC 49049 / DSM 4359 / NBRC 107923 / NS-E).